The sequence spans 156 residues: SsrA-binding protein (156 aa).

Belongs to the SmpB family.

It is found in the cytoplasm. In terms of biological role, required for rescue of stalled ribosomes mediated by trans-translation. Binds to transfer-messenger RNA (tmRNA), required for stable association of tmRNA with ribosomes. tmRNA and SmpB together mimic tRNA shape, replacing the anticodon stem-loop with SmpB. tmRNA is encoded by the ssrA gene; the 2 termini fold to resemble tRNA(Ala) and it encodes a 'tag peptide', a short internal open reading frame. During trans-translation Ala-aminoacylated tmRNA acts like a tRNA, entering the A-site of stalled ribosomes, displacing the stalled mRNA. The ribosome then switches to translate the ORF on the tmRNA; the nascent peptide is terminated with the 'tag peptide' encoded by the tmRNA and targeted for degradation. The ribosome is freed to recommence translation, which seems to be the essential function of trans-translation. This Thermoanaerobacter pseudethanolicus (strain ATCC 33223 / 39E) (Clostridium thermohydrosulfuricum) protein is SsrA-binding protein.